Here is a 356-residue protein sequence, read N- to C-terminus: Guanine nucleotide-binding protein alpha-3 subunit (356 aa).

The segment at 1–26 (MGACMSKNDEETEQKKRSQKIDRDLE) is disordered. G2 carries N-myristoyl glycine lipidation. The S-palmitoyl cysteine moiety is linked to residue C4. Over residues 7-23 (KNDEETEQKKRSQKIDR) the composition is skewed to basic and acidic residues. A G-alpha domain is found at 34 to 356 (KECKILLLGS…NNALKDSGIL (323 aa)). Residues 37–50 (KILLLGSGESGKST) form a G1 motif region. GTP-binding positions include 42–49 (GSGESGKS), 179–185 (LRARTKT), 204–208 (DVGGQ), 273–276 (NKVD), and A328. Mg(2+) is bound by residues S49 and T185. The tract at residues 177 to 185 (DVLRARTKT) is G2 motif. Residues 200–209 (IHMFDVGGQR) form a G3 motif region. The segment at 269–276 (ILFLNKVD) is G4 motif. The segment at 326 to 331 (TQATDT) is G5 motif.

This sequence belongs to the G-alpha family. G(q) subfamily. G proteins are composed of 3 units; alpha, beta and gamma. The alpha chain contains the guanine nucleotide binding site.

Its function is as follows. Guanine nucleotide-binding proteins (G proteins) are involved as modulators or transducers in various transmembrane signaling systems. Involved in conidiation. The sequence is that of Guanine nucleotide-binding protein alpha-3 subunit (gna-3) from Neurospora crassa (strain ATCC 24698 / 74-OR23-1A / CBS 708.71 / DSM 1257 / FGSC 987).